The primary structure comprises 357 residues: 3-isopropylmalate dehydrogenase (357 aa).

76 to 89 is an NAD(+) binding site; sequence GPQWDTIDPSLRPE. Arginine 96, arginine 106, arginine 134, and aspartate 224 together coordinate substrate. Residues aspartate 224, aspartate 248, and aspartate 252 each contribute to the Mg(2+) site. Residue 282 to 294 participates in NAD(+) binding; the sequence is GSAPDIAGKGIAN.

This sequence belongs to the isocitrate and isopropylmalate dehydrogenases family. LeuB type 1 subfamily. As to quaternary structure, homodimer. The cofactor is Mg(2+). Requires Mn(2+) as cofactor.

It localises to the cytoplasm. The catalysed reaction is (2R,3S)-3-isopropylmalate + NAD(+) = 4-methyl-2-oxopentanoate + CO2 + NADH. The protein operates within amino-acid biosynthesis; L-leucine biosynthesis; L-leucine from 3-methyl-2-oxobutanoate: step 3/4. Catalyzes the oxidation of 3-carboxy-2-hydroxy-4-methylpentanoate (3-isopropylmalate) to 3-carboxy-4-methyl-2-oxopentanoate. The product decarboxylates to 4-methyl-2 oxopentanoate. The sequence is that of 3-isopropylmalate dehydrogenase from Xanthomonas oryzae pv. oryzae (strain MAFF 311018).